A 463-amino-acid chain; its full sequence is NADH dehydrogenase [ubiquinone] iron-sulfur protein 2, mitochondrial (463 aa).

The transit peptide at 1-33 directs the protein to the mitochondrion; that stretch reads MAALRALCRLRGAAAQVLRPGAGVRLPIQPSRG. An N6-acetyllysine modification is found at K62. R118 carries the post-translational modification Symmetric dimethylarginine. 3 residues coordinate [4Fe-4S] cluster: C326, C332, and C347.

Belongs to the complex I 49 kDa subunit family. Core subunit of respiratory chain NADH dehydrogenase (Complex I) which is composed of 45 different subunits. Component of the iron-sulfur (IP) fragment of the enzyme. Interacts with NDUFAF3. Interacts with NDUFAF7. Interacts with CERS2. The cofactor is [4Fe-4S] cluster. Post-translationally, dimethylation at Arg-118 by NDUFAF7 takes place after NDUFS2 assembles into the complex I, leading to stabilize the early intermediate complex.

The protein localises to the mitochondrion inner membrane. It catalyses the reaction a ubiquinone + NADH + 5 H(+)(in) = a ubiquinol + NAD(+) + 4 H(+)(out). Its function is as follows. Core subunit of the mitochondrial membrane respiratory chain NADH dehydrogenase (Complex I) which catalyzes electron transfer from NADH through the respiratory chain, using ubiquinone as an electron acceptor. Essential for the catalytic activity and assembly of complex I. Redox-sensitive, critical component of the oxygen-sensing pathway in the pulmonary vasculature which plays a key role in acute pulmonary oxygen-sensing and hypoxic pulmonary vasoconstriction. Plays an important role in carotid body sensing of hypoxia. Essential for glia-like neural stem and progenitor cell proliferation, differentiation and subsequent oligodendrocyte or neuronal maturation. This is NADH dehydrogenase [ubiquinone] iron-sulfur protein 2, mitochondrial (NDUFS2) from Bos taurus (Bovine).